Here is a 487-residue protein sequence, read N- to C-terminus: MATTSPAAPRPKSKSSSLLSTLFSRPLPLYVSAFLLRIVLLLYGLWQDANSPLKYTDIDYLVFTDAARFVSRGESPYARETYRYTPILAWLLLPTTWTAGAQWGPWAAKVINVAWFSFGKVLFAAADLVAGWLIEQVLVMGKDFPSSAAKGKEKDTEKTKEGGKKGPSVTASTGMDPSRARAFAAIWLLNPMVATISTRGSSEGLLGVLVMALLWAVLSRRITLAGLLLGFSVHFKIYPFIYAPAIVWWMDQERLSGVRAGGGGGGGGQKKTSSSFRKTLTRFLTLPRLLLAFTSLATFLSLNFLMYRLYGHPFLQETYLHHVTRIDHRHNFSPYNTQLYLSSASVSPSHSAAEPKFKIESLAFLPQLVLSTILIPLTLAKKDLPTSLLAQTFAFVTFNKVCTSQYFLWYLVLLPLYLPRSSFWTSKRMGLVALGLWVLGQALWLQQAYELEFLGRSTFLPGLWMASLGFFVVNCWILGVIVGDGGR.

3 helical membrane passes run 26–46 (PLPL…YGLW), 87–107 (ILAW…GPWA), and 121–141 (VLFA…LVMG). The interval 147–175 (SAAKGKEKDTEKTKEGGKKGPSVTASTGM) is disordered. The segment covering 150–164 (KGKEKDTEKTKEGGK) has biased composition (basic and acidic residues). Helical transmembrane passes span 205–225 (LLGV…ITLA), 227–247 (LLLG…PAIV), 289–309 (LLLA…MYRL), 359–379 (IESL…PLTL), 393–413 (FAFV…YLVL), 429–449 (MGLV…QQAY), and 462–482 (GLWM…GVIV).

This sequence belongs to the PIGM family.

Its subcellular location is the endoplasmic reticulum membrane. It functions in the pathway glycolipid biosynthesis; glycosylphosphatidylinositol-anchor biosynthesis. Mannosyltransferase involved in glycosylphosphatidylinositol-anchor biosynthesis. Transfers the first alpha-1,4-mannose to GlcN-acyl-PI during GPI precursor assembly. Required for cell wall integrity. The polypeptide is GPI mannosyltransferase 1 (gim-1) (Neurospora crassa (strain ATCC 24698 / 74-OR23-1A / CBS 708.71 / DSM 1257 / FGSC 987)).